We begin with the raw amino-acid sequence, 451 residues long: UPF0210 protein NMCC_1554 (451 aa).

It belongs to the UPF0210 family. In terms of assembly, homodimer.

The sequence is that of UPF0210 protein NMCC_1554 from Neisseria meningitidis serogroup C (strain 053442).